The chain runs to 656 residues: DNA topoisomerase 3 (656 aa).

The 155-residue stretch at 2-156 (KVLCVAEKNS…QVYRAVFSHL (155 aa)) folds into the Toprim domain. The region spanning 172-635 (DMKSVHAVGT…DIVEKYRKYW (464 aa)) is the Topo IA-type catalytic domain. The active-site O-(5'-phospho-DNA)-tyrosine intermediate is Tyr-356.

The protein belongs to the type IA topoisomerase family. In terms of assembly, forms a complex with SGS1 and RMI1. Interacts with SGS1.

The enzyme catalyses ATP-independent breakage of single-stranded DNA, followed by passage and rejoining.. Its function is as follows. Releases the supercoiling and torsional tension of DNA introduced during the DNA replication and transcription by transiently cleaving and rejoining one strand of the DNA duplex. Introduces a single-strand break via transesterification at a target site in duplex DNA. The scissile phosphodiester is attacked by the catalytic tyrosine of the enzyme, resulting in the formation of a DNA-(5'-phosphotyrosyl)-enzyme intermediate and the expulsion of a 3'-OH DNA strand. The free DNA strand than undergoes passage around the unbroken strand thus removing DNA supercoils. Finally, in the religation step, the DNA 3'-OH attacks the covalent intermediate to expel the active-site tyrosine and restore the DNA phosphodiester backbone. Essential for proper chromosome segregation in both meiosis and mitosis. Weakly relaxes negative supercoils and displays a distinct preference for binding single-stranded DNA. The TOP3-SGS1 protein complex may function as a eukaryotic reverse gyrase introducing positive supercoils into extrachromosomal ribosomal DNA rings. In Saccharomyces cerevisiae (strain ATCC 204508 / S288c) (Baker's yeast), this protein is DNA topoisomerase 3 (TOP3).